The primary structure comprises 902 residues: Protein translocase subunit SecA (902 aa).

ATP-binding positions include Gln87, 105–109 (GEGKT), and Asp512. Disordered regions lie at residues 565–584 (RRIDNQLRGRSGRQGDPGSS) and 840–902 (VEEQ…GKLK). 2 stretches are compositionally biased toward basic and acidic residues: residues 840–859 (VEEQRRQADDVPKNFEHEDA) and 873–882 (QVREGAKVGR). Zn(2+) is bound by residues Cys886, Cys888, Cys897, and His898. The segment covering 892–902 (KKYKQCHGKLK) has biased composition (basic residues).

Belongs to the SecA family. As to quaternary structure, monomer and homodimer. Part of the essential Sec protein translocation apparatus which comprises SecA, SecYEG and auxiliary proteins SecDF-YajC and YidC. Requires Zn(2+) as cofactor.

The protein resides in the cell inner membrane. It localises to the cytoplasm. It catalyses the reaction ATP + H2O + cellular proteinSide 1 = ADP + phosphate + cellular proteinSide 2.. In terms of biological role, part of the Sec protein translocase complex. Interacts with the SecYEG preprotein conducting channel. Has a central role in coupling the hydrolysis of ATP to the transfer of proteins into and across the cell membrane, serving both as a receptor for the preprotein-SecB complex and as an ATP-driven molecular motor driving the stepwise translocation of polypeptide chains across the membrane. The sequence is that of Protein translocase subunit SecA from Alteromonas mediterranea (strain DSM 17117 / CIP 110805 / LMG 28347 / Deep ecotype).